A 446-amino-acid polypeptide reads, in one-letter code: Neuropeptide Y receptor type 5 (446 aa).

Topologically, residues 1–42 are extracellular; it reads MGSEIPDYYNKTLASENNTVATRNSGFPVWEDYKGSVDDLQY. Asn10 and Asn17 each carry an N-linked (GlcNAc...) asparagine glycan. A helical transmembrane segment spans residues 43 to 63; the sequence is FLIGLYTFVSLLGFMGNLLIL. At 64-77 the chain is on the cytoplasmic side; sequence MAVMRKRNQKTTVN. The chain crosses the membrane as a helical span at residues 78–98; sequence FLIGNLAFSDILVVLFCSPFT. The Extracellular portion of the chain corresponds to 99–117; that stretch reads LTSVLLDQWMFGKVMCHIM. An intrachain disulfide couples Cys114 to Cys198. A helical transmembrane segment spans residues 118–138; that stretch reads PFLQCVTVLVSTLILISIAIV. Over 139 to 156 the chain is Cytoplasmic; sequence RYHMIKHPVSNNLTANHG. The helical transmembrane segment at 157-177 threads the bilayer; that stretch reads YFLIATVWTLGLAICSPLPVF. Residues 178–208 lie on the Extracellular side of the membrane; sequence HSLVELQESFGSAWLSSRYLCVESWPSDSYR. Residues 209–229 form a helical membrane-spanning segment; that stretch reads IAFTISLLLVQYILPLVCLTV. Residues 230–369 are Cytoplasmic-facing; sequence SHTSVCRTIS…RKRSRSVFYR (140 aa). Residues 297 to 325 form a disordered region; the sequence is RPAPAGPALESREGRPPGKVGSMQSQPPP. The chain crosses the membrane as a helical span at residues 370–390; sequence LTVLILVFAVSWMPLHLFHVV. At 391 to 407 the chain is on the extracellular side; sequence TDFNDNLISNRHFKLVY. A helical transmembrane segment spans residues 408 to 428; it reads CICHLLGMMSCCLNPILYGFL. Residues 429–446 are Cytoplasmic-facing; it reads NNGIKADLMSLIHCLHVS. A lipid anchor (S-palmitoyl cysteine) is attached at Cys442.

Belongs to the G-protein coupled receptor 1 family.

The protein localises to the cell membrane. Receptor for neuropeptide Y and peptide YY. The activity of this receptor is mediated by G proteins that inhibit adenylate cyclase activity. Seems to be associated with food intake. Could be involved in feeding disorders. The polypeptide is Neuropeptide Y receptor type 5 (NPY5R) (Sus scrofa (Pig)).